The sequence spans 128 residues: Aspartate 1-decarboxylase (128 aa).

S25 acts as the Schiff-base intermediate with substrate; via pyruvic acid in catalysis. S25 bears the Pyruvic acid (Ser) mark. T57 provides a ligand contact to substrate. Y58 serves as the catalytic Proton donor. Position 73 to 75 (73 to 75) interacts with substrate; sequence GAA.

Belongs to the PanD family. In terms of assembly, heterooctamer of four alpha and four beta subunits. Pyruvate is required as a cofactor. Is synthesized initially as an inactive proenzyme, which is activated by self-cleavage at a specific serine bond to produce a beta-subunit with a hydroxyl group at its C-terminus and an alpha-subunit with a pyruvoyl group at its N-terminus.

It is found in the cytoplasm. The enzyme catalyses L-aspartate + H(+) = beta-alanine + CO2. Its pathway is cofactor biosynthesis; (R)-pantothenate biosynthesis; beta-alanine from L-aspartate: step 1/1. In terms of biological role, catalyzes the pyruvoyl-dependent decarboxylation of aspartate to produce beta-alanine. This Ruminiclostridium cellulolyticum (strain ATCC 35319 / DSM 5812 / JCM 6584 / H10) (Clostridium cellulolyticum) protein is Aspartate 1-decarboxylase.